A 195-amino-acid polypeptide reads, in one-letter code: ATP-dependent Clp protease proteolytic subunit 1 (195 aa).

The active-site Nucleophile is the Ser-96. His-121 is a catalytic residue.

The protein belongs to the peptidase S14 family. As to quaternary structure, fourteen ClpP subunits assemble into 2 heptameric rings which stack back to back to give a disk-like structure with a central cavity, resembling the structure of eukaryotic proteasomes.

The protein localises to the cytoplasm. It catalyses the reaction Hydrolysis of proteins to small peptides in the presence of ATP and magnesium. alpha-casein is the usual test substrate. In the absence of ATP, only oligopeptides shorter than five residues are hydrolyzed (such as succinyl-Leu-Tyr-|-NHMec, and Leu-Tyr-Leu-|-Tyr-Trp, in which cleavage of the -Tyr-|-Leu- and -Tyr-|-Trp bonds also occurs).. Cleaves peptides in various proteins in a process that requires ATP hydrolysis. Has a chymotrypsin-like activity. Plays a major role in the degradation of misfolded proteins. The polypeptide is ATP-dependent Clp protease proteolytic subunit 1 (Prochlorococcus marinus (strain MIT 9312)).